The following is a 265-amino-acid chain: Sulfur carrier protein FdhD (265 aa).

The active-site Cysteine persulfide intermediate is Cys-107.

This sequence belongs to the FdhD family.

The protein localises to the cytoplasm. Its function is as follows. Required for formate dehydrogenase (FDH) activity. Acts as a sulfur carrier protein that transfers sulfur from IscS to the molybdenum cofactor prior to its insertion into FDH. This chain is Sulfur carrier protein FdhD, found in Staphylococcus aureus (strain bovine RF122 / ET3-1).